The primary structure comprises 470 residues: ATP synthase subunit beta 2 (470 aa).

155 to 162 is an ATP binding site; the sequence is GGAGVGKT.

This sequence belongs to the ATPase alpha/beta chains family. In terms of assembly, F-type ATPases have 2 components, CF(1) - the catalytic core - and CF(0) - the membrane proton channel. CF(1) has five subunits: alpha(3), beta(3), gamma(1), delta(1), epsilon(1). CF(0) has three main subunits: a(1), b(2) and c(9-12). The alpha and beta chains form an alternating ring which encloses part of the gamma chain. CF(1) is attached to CF(0) by a central stalk formed by the gamma and epsilon chains, while a peripheral stalk is formed by the delta and b chains.

Its subcellular location is the cell inner membrane. The catalysed reaction is ATP + H2O + 4 H(+)(in) = ADP + phosphate + 5 H(+)(out). Functionally, produces ATP from ADP in the presence of a proton gradient across the membrane. The catalytic sites are hosted primarily by the beta subunits. This chain is ATP synthase subunit beta 2, found in Nitrosospira multiformis (strain ATCC 25196 / NCIMB 11849 / C 71).